We begin with the raw amino-acid sequence, 23 residues long: Cytochrome c oxidase subunit 7A1, mitochondrial (23 aa).

Belongs to the cytochrome c oxidase VIIa family. In terms of assembly, component of the complex IV (CIV, cytochrome c oxidase), a multisubunit enzyme composed of 14 subunits. The complex is composed of a catalytic core of 3 subunits MT-CO1, MT-CO2 and MT-CO3, encoded in the mitochondrial DNA, and 11 supernumerary subunits COX4I1 (or COX4I2), COX5A, COX5B, COX6A2 (or COX6A1), COX6B1 (or COX6B2), COX6C, COX7A1 (or COX7A2), COX7B, COX7C, COX8B and NDUFA4, which are encoded in the nuclear genome. The complex exists as a monomer or a dimer and forms supercomplexes (SCs) in the inner mitochondrial membrane with NADH-ubiquinone oxidoreductase (complex I, CI) and ubiquinol-cytochrome c oxidoreductase (cytochrome b-c1 complex, complex III, CIII), resulting in different assemblies (supercomplex SCI(1)III(2)IV(1) and megacomplex MCI(2)III(2)IV(2)).

The protein localises to the mitochondrion inner membrane. The protein operates within energy metabolism; oxidative phosphorylation. Component of the mitochondrial respiratory complex IV (CIV, also named cytochrome c oxidase complex), the last enzyme in the mitochondrial electron transport chain which drives oxidative phosphorylation. The CIV complex is the component of the respiratory chain that catalyzes the reduction of oxygen to water. Acts as an assembly factor that specifically drives the homodimerization of CIV complexes, mediating the formation of mitochondrial respiratory supercomplexes (respirasomes) containing two CIV: supercomplxes with two molecules of CIV show improved activity. Despite being highly expressed in brown adipose tissue, not required for thermogenesis. In Canis lupus familiaris (Dog), this protein is Cytochrome c oxidase subunit 7A1, mitochondrial (COX7A1).